A 296-amino-acid polypeptide reads, in one-letter code: UDP-N-acetylglucosamine transporter TMEM241 (296 aa).

Transmembrane regions (helical) follow at residues 7 to 29 (LVGLTFCTCYLASYLTNKYVLSV), 32 to 52 (FTYPTLFQGWQTLIGGLLLHV), 67 to 87 (SHVLVWLPASVLFVGIIYAGS), 93 to 113 (LAIPVFLTLHNVAEVIICGYQ), 121 to 141 (TSPAKICSALLLLAAAGCLPF), 146 to 166 (FNPDGYFWAIIHLLCVGAYKI), 187 to 207 (IFSVVLLAFASHPTGDLFSVL), 211 to 231 (FLYFYRFHGSCCASGFLGFFL), 250 to 270 (WIFFAKIITAGLSILLFDAIL), and 271 to 291 (TSATTGCLLLGALGEALLVFS).

It belongs to the nucleotide-sugar transporter family. SLC35A subfamily.

It is found in the golgi apparatus. Its subcellular location is the cis-Golgi network membrane. Golgi-localized UDP-N-acetylglucosamine (UDP-GlcNAc) transporter that transports UDP-N-acetylglucosamine into Golgi lumen. Contributes to lysosomal targeting of NPC2, a key protein required for lysosomal cholesterol exiting, and that utilizes the mannose-6-phosphate (M6P) modification pathway for its lysosomal targeting. The protein is UDP-N-acetylglucosamine transporter TMEM241 of Homo sapiens (Human).